Reading from the N-terminus, the 171-residue chain is Shikimate kinase (171 aa).

An ATP-binding site is contributed by 11–16 (GTGKTT). Residue Thr-15 participates in Mg(2+) binding. Asp-33, Arg-57, and Gly-79 together coordinate substrate. Arg-117 serves as a coordination point for ATP. A substrate-binding site is contributed by Arg-136.

This sequence belongs to the shikimate kinase family. Monomer. Mg(2+) is required as a cofactor.

The protein resides in the cytoplasm. It carries out the reaction shikimate + ATP = 3-phosphoshikimate + ADP + H(+). Its pathway is metabolic intermediate biosynthesis; chorismate biosynthesis; chorismate from D-erythrose 4-phosphate and phosphoenolpyruvate: step 5/7. Functionally, catalyzes the specific phosphorylation of the 3-hydroxyl group of shikimic acid using ATP as a cosubstrate. In Caldanaerobacter subterraneus subsp. tengcongensis (strain DSM 15242 / JCM 11007 / NBRC 100824 / MB4) (Thermoanaerobacter tengcongensis), this protein is Shikimate kinase.